We begin with the raw amino-acid sequence, 184 residues long: NADH-quinone oxidoreductase subunit B (184 aa).

The [4Fe-4S] cluster site is built by C63, C64, C128, and C158.

Belongs to the complex I 20 kDa subunit family. In terms of assembly, NDH-1 is composed of 14 different subunits. Subunits NuoB, C, D, E, F, and G constitute the peripheral sector of the complex. Requires [4Fe-4S] cluster as cofactor.

It is found in the cell inner membrane. The enzyme catalyses a quinone + NADH + 5 H(+)(in) = a quinol + NAD(+) + 4 H(+)(out). Its function is as follows. NDH-1 shuttles electrons from NADH, via FMN and iron-sulfur (Fe-S) centers, to quinones in the respiratory chain. Couples the redox reaction to proton translocation (for every two electrons transferred, four hydrogen ions are translocated across the cytoplasmic membrane), and thus conserves the redox energy in a proton gradient. This chain is NADH-quinone oxidoreductase subunit B, found in Xanthomonas campestris pv. campestris (strain 8004).